The following is a 570-amino-acid chain: Interleukin-1 receptor accessory protein (570 aa).

The N-terminal stretch at 1 to 20 (MTLLWCVVSLYFYGILQSDA) is a signal peptide. 3 Ig-like C2-type domains span residues 21-128 (SERC…VAFP), 136-226 (SCFN…FHLT), and 242-350 (PPVI…VKQK). Topologically, residues 21–367 (SERCDDWGLD…VELACGFGAT (347 aa)) are extracellular. Disulfide bonds link Cys-24–Cys-122, Cys-47–Cys-114, Cys-137–Cys-181, Cys-160–Cys-212, and Cys-266–Cys-332. The N-linked (GlcNAc...) asparagine glycan is linked to Asn-57. The interval 69–85 (IWYWTRQDRDLEEPINF) is essential for interaction with PTPRD. Asn-107, Asn-111, and Asn-118 each carry an N-linked (GlcNAc...) asparagine glycan. Asn-196, Asn-209, and Asn-299 each carry an N-linked (GlcNAc...) asparagine glycan. Residues 368–388 (VLLVVILIVVYHVYWLEMVLF) traverse the membrane as a helical segment. At 389-570 (YRAHFGTDET…GLSYSSLKNV (182 aa)) the chain is on the cytoplasmic side. One can recognise a TIR domain in the interval 403–546 (KEYDIYVSYA…RFWKQLQVAM (144 aa)). Glu-482 is an active-site residue. The interval 549 to 570 (KKSPRRSSSDEQGLSYSSLKNV) is disordered. Position 557 is a phosphoserine (Ser-557). The span at 558–570 (DEQGLSYSSLKNV) shows a compositional bias: polar residues.

This sequence belongs to the interleukin-1 receptor family. In terms of assembly, the interleukin-36 receptor complex is a heterodimer of IL1RL2 and IL1RAP; the association is inhibited by IL36RN. The interleukin-1 receptor complex is a heterodimer of IL1R1 and IL1RAP. Associates with IL1R2 to form a non-signaling interleukin-1 receptor complex. Interacts with IL-33-bound IL1RL1 to form the minimal interleukin-33 signaling complex with a 1:1:1 stoichiometry. Interacts with KIT (independently of stimulation with KITLG/SCF). A mast cell-specific KITLG/SCF-induced interleukin-33 signaling complex contains IL1RL1, IL1RAP, KIT and MYD88. Interacts (via the first immunoglobilin domain) with PTPRD (via the third immunoglobilin domain); induces pre- and postsynaptic differentiation of neurons.

The protein resides in the cell membrane. It localises to the secreted. It carries out the reaction NAD(+) + H2O = ADP-D-ribose + nicotinamide + H(+). In terms of biological role, coreceptor for IL1RL2 in the IL-36 signaling system. Coreceptor with IL1R1 in the IL-1 signaling system. Associates with IL1R1 bound to IL1B to form the high affinity interleukin-1 receptor complex which mediates interleukin-1-dependent activation of NF-kappa-B and other pathways. Signaling involves the recruitment of adapter molecules such as TOLLIP, MYD88, and IRAK1 or IRAK2 via the respective TIR domains of the receptor/coreceptor subunits. Recruits TOLLIP to the signaling complex. Does not bind to interleukin-1 alone; binding of IL1RN to IL1R1, prevents its association with IL1R1 to form a signaling complex. The cellular response is modulated through a non-signaling association with the membrane IL1R2 decoy receptor. Coreceptor for IL1RL1 in the IL-33 signaling system. Can bidirectionally induce pre- and postsynaptic differentiation of neurons by trans-synaptically binding to PTPRD. May play a role in IL1B-mediated costimulation of IFNG production from T-helper 1 (Th1) cells. Its function is as follows. Associates with secreted ligand-bound IL1R2 and increases the affinity of secreted IL1R2 for IL1B; this complex formation may be the dominant mechanism for neutralization of IL1B by secreted/soluble receptors. Enhances the ability of secreted IL1R1 to inhibit IL-33 signaling. The sequence is that of Interleukin-1 receptor accessory protein (IL1RAP) from Macaca mulatta (Rhesus macaque).